A 61-amino-acid chain; its full sequence is Double gene block protein 1 (61 aa).

Residues Met-1–Asn-45 form a disordered region. The segment at Gly-17–Lys-35 is RNA-binding. Basic and acidic residues predominate over residues Val-28–Ala-37.

It belongs to the carmovirus double gene block protein 1 family. In terms of assembly, homodimer.

Its function is as follows. Cell-to-cell movement. Displays RNA-binding activity. The polypeptide is Double gene block protein 1 (Carnation mottle virus (CarMV)).